A 273-amino-acid polypeptide reads, in one-letter code: NAD-dependent protein deacylase (273 aa).

Residues 20-272 (RERLRQRIFF…PEFVEKLLEG (253 aa)) form the Deacetylase sirtuin-type domain. 48 to 67 (GAGISAESGIRTFRAADGLW) is a binding site for NAD(+). Residues Tyr-92 and Arg-95 each coordinate substrate. Position 129–132 (129–132 (QNID)) interacts with NAD(+). Catalysis depends on His-147, which acts as the Proton acceptor. Residues Cys-155 and Cys-174 each coordinate Zn(2+). Residues 214-216 (GTS), 240-242 (NLE), and Ala-258 each bind NAD(+).

The protein belongs to the sirtuin family. Class III subfamily. The cofactor is Zn(2+).

Its subcellular location is the cytoplasm. The enzyme catalyses N(6)-acetyl-L-lysyl-[protein] + NAD(+) + H2O = 2''-O-acetyl-ADP-D-ribose + nicotinamide + L-lysyl-[protein]. It catalyses the reaction N(6)-succinyl-L-lysyl-[protein] + NAD(+) + H2O = 2''-O-succinyl-ADP-D-ribose + nicotinamide + L-lysyl-[protein]. The catalysed reaction is N(6)-(2-hydroxyisobutanoyl)-L-lysyl-[protein] + NAD(+) + H2O = 2''-O-(2-hydroxyisobutanoyl)-ADP-D-ribose + nicotinamide + L-lysyl-[protein]. Functionally, NAD-dependent lysine deacetylase that specifically removes acetyl groups on target proteins. Also acts as a protein-lysine deacylase by mediating protein desuccinylation and de-2-hydroxyisobutyrylation. Modulates the activities of several proteins which are inactive in their acylated form. This is NAD-dependent protein deacylase from Shigella flexneri.